The chain runs to 138 residues: Large ribosomal subunit protein uL16 (138 aa).

Residues 1–15 are compositionally biased toward basic residues; that stretch reads MLSPRKVKYRKKQRG. The interval 1 to 21 is disordered; sequence MLSPRKVKYRKKQRGRLSGEA.

The protein belongs to the universal ribosomal protein uL16 family. In terms of assembly, part of the 50S ribosomal subunit.

Binds 23S rRNA and is also seen to make contacts with the A and possibly P site tRNAs. The chain is Large ribosomal subunit protein uL16 from Borrelia recurrentis (strain A1).